The chain runs to 575 residues: Transcription factor ncaA (575 aa).

2 stretches are compositionally biased toward polar residues: residues 1 to 15 (MAETTPSRPNDTPEN) and 22 to 34 (DNQSQSAGQSKNP). 2 disordered regions span residues 1-40 (MAETTPSRPNDTPENSPGGGDDNQSQSAGQSKNPASVKDR) and 79-114 (IRSGITRRQARTSSGKRDTPERAMGKGPSEHFAGGE). Residues 39–66 (DRKCQYCHQAFTSSSLGRHLDQYLFKKK) form a UBZ4-type; degenerate zinc finger. A compositionally biased stretch (basic and acidic residues) spans 93-102 (GKRDTPERAM). Residues 337–371 (FAREVEKRKTLDEQLARVQQEANQLRAQVEKLGSC) adopt a coiled-coil conformation. Residues 429–575 (GRVGVGYGNP…ASGPPPSSGA (147 aa)) are disordered. The segment covering 440–454 (LDDRSSADTKARATE) has biased composition (basic and acidic residues). Low complexity predominate over residues 455–471 (EPPASAALASTSTSAPP). Residues 472–485 (SAHPPPRALQPAPG) show a composition bias toward pro residues. 2 stretches are compositionally biased toward polar residues: residues 493 to 513 (DQSSSHTGGASAPSSQNTSPY) and 538 to 558 (SAANPSATAPNTWNPHSHQSL).

Interacts with atrR.

It localises to the nucleus. In terms of biological role, transcription factor required for normal voriconazole resistance. Contributes to the function of atrR and regulates the expression of the atrR target gene abcG1. The polypeptide is Transcription factor ncaA (Aspergillus fumigatus (strain ATCC MYA-4609 / CBS 101355 / FGSC A1100 / Af293) (Neosartorya fumigata)).